Reading from the N-terminus, the 95-residue chain is Protein TusB (95 aa).

Belongs to the DsrH/TusB family. In terms of assembly, heterohexamer, formed by a dimer of trimers. The hexameric TusBCD complex contains 2 copies each of TusB, TusC and TusD. The TusBCD complex interacts with TusE.

The protein localises to the cytoplasm. Part of a sulfur-relay system required for 2-thiolation of 5-methylaminomethyl-2-thiouridine (mnm(5)s(2)U) at tRNA wobble positions. This is Protein TusB from Shigella flexneri.